The sequence spans 303 residues: Hemolysin E (303 aa).

Cysteines 87 and 285 form a disulfide. A helical transmembrane segment spans residues 183–203 (AGVVAGPFGLIISYSIAAGVV).

Belongs to the hemolysin E family. In terms of assembly, monomer and oligomer. In periplasm, it is present as a monomer, while in outer membrane vesicles, it oligomerizes to form a pore structure that is active. The pore is formed by a dodecamer. In periplasm, it forms a disulfide bond, which prevents the oligomerization. In outer membrane vesicles, the redox status prevents formation of the disulfide bond, leading to oligomerization and pore formation.

Its subcellular location is the secreted. It localises to the periplasm. The protein localises to the host cell membrane. Functionally, toxin, which has some hemolytic activity towards mammalian cells. Acts by forming a pore-like structure upon contact with mammalian cells. The polypeptide is Hemolysin E (hlyE) (Escherichia coli O157:H7).